Here is a 190-residue protein sequence, read N- to C-terminus: Peptidyl-tRNA hydrolase (190 aa).

Residue Phe14 coordinates tRNA. Catalysis depends on His19, which acts as the Proton acceptor. TRNA-binding residues include Met64, Asn66, and Asn112.

Belongs to the PTH family. In terms of assembly, monomer.

The protein localises to the cytoplasm. It catalyses the reaction an N-acyl-L-alpha-aminoacyl-tRNA + H2O = an N-acyl-L-amino acid + a tRNA + H(+). Functionally, hydrolyzes ribosome-free peptidyl-tRNAs (with 1 or more amino acids incorporated), which drop off the ribosome during protein synthesis, or as a result of ribosome stalling. Catalyzes the release of premature peptidyl moieties from peptidyl-tRNA molecules trapped in stalled 50S ribosomal subunits, and thus maintains levels of free tRNAs and 50S ribosomes. The chain is Peptidyl-tRNA hydrolase from Staphylococcus saprophyticus subsp. saprophyticus (strain ATCC 15305 / DSM 20229 / NCIMB 8711 / NCTC 7292 / S-41).